We begin with the raw amino-acid sequence, 159 residues long: UPF0262 protein Dshi_0980 (159 aa).

It belongs to the UPF0262 family.

This Dinoroseobacter shibae (strain DSM 16493 / NCIMB 14021 / DFL 12) protein is UPF0262 protein Dshi_0980.